Reading from the N-terminus, the 291-residue chain is HTH-type transcriptional regulator DgcR (291 aa).

Residues 1–58 (MRLRHIEVFHAIYTTGSITNAAKALHVSQPSVSKVLSHAEMQLGFKLFERVKGRLIPT) form the HTH lysR-type domain. The H-T-H motif DNA-binding region spans 18-37 (ITNAAKALHVSQPSVSKVLS).

Belongs to the LysR transcriptional regulatory family.

Functionally, transcriptional regulator that positively regulates the expression of the D-Glu gene cluster (DGC). The cluster includes dgcN and dgcA, which are involved in a deamination-independent D-glutamate degradation pathway, dgcR itself, dgcT, dgcP and dgcH. Acts by binding the consensus sequence upstream of dgcR, dgcT, dgcP and dgcH. This chain is HTH-type transcriptional regulator DgcR, found in Pseudoalteromonas sp.